Consider the following 446-residue polypeptide: Chromosomal replication initiator protein DnaA (446 aa).

The segment at 1-81 (MENIADLWNS…AKLNIRFIIP (81 aa)) is domain I, interacts with DnaA modulators. Residues 81-109 (PQSQTEEEVDYPPAKAKKMNDESNHLPQS) are domain II. Positions 110–326 (MLNPKYTFDT…GALIRVVAYS (217 aa)) are domain III, AAA+ region. ATP is bound by residues glycine 154, glycine 156, lysine 157, and threonine 158. Residues 327-446 (SLINKDINAD…QIEEINDILK (120 aa)) form a domain IV, binds dsDNA region.

Belongs to the DnaA family. Oligomerizes as a right-handed, spiral filament on DNA at oriC.

It localises to the cytoplasm. Its function is as follows. Plays an essential role in the initiation and regulation of chromosomal replication. ATP-DnaA binds to the origin of replication (oriC) to initiate formation of the DNA replication initiation complex once per cell cycle. Binds the DnaA box (a 9 base pair repeat at the origin) and separates the double-stranded (ds)DNA. Forms a right-handed helical filament on oriC DNA; dsDNA binds to the exterior of the filament while single-stranded (ss)DNA is stabiized in the filament's interior. The ATP-DnaA-oriC complex binds and stabilizes one strand of the AT-rich DNA unwinding element (DUE), permitting loading of DNA polymerase. After initiation quickly degrades to an ADP-DnaA complex that is not apt for DNA replication. Binds acidic phospholipids. In Bacillus cytotoxicus (strain DSM 22905 / CIP 110041 / 391-98 / NVH 391-98), this protein is Chromosomal replication initiator protein DnaA.